The chain runs to 218 residues: Nucleoid occlusion factor SlmA (218 aa).

Positions 30–90 (ERRQQVLTVL…ALIEHIESTL (61 aa)) constitute an HTH tetR-type domain. Positions 53 to 72 (TTARLAKEVGVSEAALYRYF) form a DNA-binding region, H-T-H motif.

The protein belongs to the nucleoid occlusion factor SlmA family. In terms of assembly, homodimer. Interacts with FtsZ.

It is found in the cytoplasm. The protein localises to the nucleoid. Required for nucleoid occlusion (NO) phenomenon, which prevents Z-ring formation and cell division over the nucleoid. Acts as a DNA-associated cell division inhibitor that binds simultaneously chromosomal DNA and FtsZ, and disrupts the assembly of FtsZ polymers. SlmA-DNA-binding sequences (SBS) are dispersed on non-Ter regions of the chromosome, preventing FtsZ polymerization at these regions. In Haemophilus influenzae (strain PittGG), this protein is Nucleoid occlusion factor SlmA.